Here is a 217-residue protein sequence, read N- to C-terminus: Adenylate kinase (217 aa).

10–15 serves as a coordination point for ATP; that stretch reads GAGKGT. The interval 30-59 is NMP; sequence STGDMLRAQVKAGTALGLEAKKHMDAGGLV. AMP contacts are provided by residues Thr-31, Arg-36, 57 to 59, 85 to 88, and Gln-92; these read GLV and GFPR. The LID stretch occupies residues 122–159; it reads GRRAHLASGRTYHVKFNPPKVEGIDDVTGEPLVQRDDD. Residues Arg-123 and 132-133 contribute to the ATP site; that span reads TY. AMP contacts are provided by Arg-156 and Arg-167. Gly-203 serves as a coordination point for ATP.

This sequence belongs to the adenylate kinase family. In terms of assembly, monomer.

The protein localises to the cytoplasm. The enzyme catalyses AMP + ATP = 2 ADP. It participates in purine metabolism; AMP biosynthesis via salvage pathway; AMP from ADP: step 1/1. Functionally, catalyzes the reversible transfer of the terminal phosphate group between ATP and AMP. Plays an important role in cellular energy homeostasis and in adenine nucleotide metabolism. This Dechloromonas aromatica (strain RCB) protein is Adenylate kinase.